Consider the following 402-residue polypeptide: Subtilisin-like protease 9 (402 aa).

Positions 1–18 (MGFFRILFSLSLCALSLA) are cleaved as a signal peptide. A propeptide spanning residues 19–120 (IPSKLIGLEN…VEVDRVVKLD (102 aa)) is cleaved from the precursor. In terms of domain architecture, Inhibitor I9 spans 36 to 119 (SYIVVMKSAV…YVEVDRVVKL (84 aa)). Positions 130-402 (SWGLGRISHR…KKLLYNGSGA (273 aa)) constitute a Peptidase S8 domain. Active-site charge relay system residues include aspartate 162 and histidine 193. Asparagine 254 is a glycosylation site (N-linked (GlcNAc...) asparagine). Catalysis depends on serine 348, which acts as the Charge relay system. 2 N-linked (GlcNAc...) asparagine glycosylation sites follow: asparagine 390 and asparagine 398.

It belongs to the peptidase S8 family.

Its subcellular location is the secreted. Functionally, secreted subtilisin-like serine protease with keratinolytic activity that contributes to pathogenicity. This chain is Subtilisin-like protease 9 (SUB9), found in Arthroderma gypseum (strain ATCC MYA-4604 / CBS 118893) (Microsporum gypseum).